A 432-amino-acid chain; its full sequence is Argininosuccinate lyase (432 aa).

It belongs to the lyase 1 family. Argininosuccinate lyase subfamily.

The protein localises to the cytoplasm. The catalysed reaction is 2-(N(omega)-L-arginino)succinate = fumarate + L-arginine. It functions in the pathway amino-acid biosynthesis; L-arginine biosynthesis; L-arginine from L-ornithine and carbamoyl phosphate: step 3/3. This Xanthomonas euvesicatoria pv. vesicatoria (strain 85-10) (Xanthomonas campestris pv. vesicatoria) protein is Argininosuccinate lyase.